A 396-amino-acid chain; its full sequence is S-adenosylmethionine synthase 2 (396 aa).

Residue Glu-13 participates in Mg(2+) binding. His-19 contacts ATP. Position 47 (Glu-47) interacts with K(+). Residues Glu-60 and Gln-103 each coordinate L-methionine. ATP-binding positions include 171-173 (DGK), 239-242 (SGRF), Asp-250, 256-257 (RK), Ala-273, Lys-277, and Lys-281. Residue Asp-250 participates in L-methionine binding. Lys-281 is an L-methionine binding site.

It belongs to the AdoMet synthase family. As to quaternary structure, homotetramer. It depends on Mn(2+) as a cofactor. The cofactor is Mg(2+). Co(2+) serves as cofactor. K(+) is required as a cofactor. In terms of tissue distribution, expressed in roots, stems and leaves (at protein level).

The protein localises to the cytoplasm. It carries out the reaction L-methionine + ATP + H2O = S-adenosyl-L-methionine + phosphate + diphosphate. It participates in amino-acid biosynthesis; S-adenosyl-L-methionine biosynthesis; S-adenosyl-L-methionine from L-methionine: step 1/1. In terms of biological role, catalyzes the formation of S-adenosylmethionine from methionine and ATP. The reaction comprises two steps that are both catalyzed by the same enzyme: formation of S-adenosylmethionine (AdoMet) and triphosphate, and subsequent hydrolysis of the triphosphate. May be involved in the synthesis of betain in response to abiotic stress such as high salinity. This Atriplex nummularia (Old man saltbush) protein is S-adenosylmethionine synthase 2 (SAMS2).